The following is a 190-amino-acid chain: RNA pyrophosphohydrolase (190 aa).

One can recognise a Nudix hydrolase domain in the interval 6–149 (GYRPNVGIVL…KRGVYARALC (144 aa)). The short motif at 38 to 59 (GGMHSDETPVEAMYRELNEETG) is the Nudix box element.

The protein belongs to the Nudix hydrolase family. RppH subfamily. Requires a divalent metal cation as cofactor.

Its function is as follows. Accelerates the degradation of transcripts by removing pyrophosphate from the 5'-end of triphosphorylated RNA, leading to a more labile monophosphorylated state that can stimulate subsequent ribonuclease cleavage. This Xylella fastidiosa (strain 9a5c) protein is RNA pyrophosphohydrolase.